The chain runs to 284 residues: Protoheme IX farnesyltransferase (284 aa).

Transmembrane regions (helical) follow at residues 13 to 33, 35 to 55, 87 to 107, 108 to 128, 133 to 153, 162 to 182, 224 to 244, and 264 to 284; these read IIIGNIILIIGSFLFSSFPFF, VFLFFFTILGTSLVIASSCIF, IFASFIGIVGFFILGLFVNIL, SMFLSFIGFVIYVFFYTFFLK, YSTFIGSFSGSIPSVIGHTAI, FLLFIIFIFWQMSHFYAIAIL, FLGYLSYIFLLFFSFFSFYWL, and FYYSIAVVILFNFLISIDFIF.

Belongs to the UbiA prenyltransferase family. Protoheme IX farnesyltransferase subfamily.

The protein localises to the cell membrane. It carries out the reaction heme b + (2E,6E)-farnesyl diphosphate + H2O = Fe(II)-heme o + diphosphate. It participates in porphyrin-containing compound metabolism; heme O biosynthesis; heme O from protoheme: step 1/1. In terms of biological role, converts heme B (protoheme IX) to heme O by substitution of the vinyl group on carbon 2 of heme B porphyrin ring with a hydroxyethyl farnesyl side group. The protein is Protoheme IX farnesyltransferase of Buchnera aphidicola subsp. Schizaphis graminum (strain Sg).